The sequence spans 336 residues: Phosphate acyltransferase (336 aa).

This sequence belongs to the PlsX family. As to quaternary structure, homodimer. Probably interacts with PlsY.

The protein resides in the cytoplasm. It catalyses the reaction a fatty acyl-[ACP] + phosphate = an acyl phosphate + holo-[ACP]. It functions in the pathway lipid metabolism; phospholipid metabolism. Functionally, catalyzes the reversible formation of acyl-phosphate (acyl-PO(4)) from acyl-[acyl-carrier-protein] (acyl-ACP). This enzyme utilizes acyl-ACP as fatty acyl donor, but not acyl-CoA. The polypeptide is Phosphate acyltransferase (Pseudomonas putida (strain ATCC 700007 / DSM 6899 / JCM 31910 / BCRC 17059 / LMG 24140 / F1)).